The primary structure comprises 117 residues: Small ribosomal subunit protein eS25 (117 aa).

A disordered region spans residues 1 to 38 (MPPKKDAKSSAKQPQKTQKKKEGSGGGKAKKKKWSKGK). The span at 28–37 (KAKKKKWSKG) shows a compositional bias: basic residues.

Belongs to the eukaryotic ribosomal protein eS25 family.

The sequence is that of Small ribosomal subunit protein eS25 (RpS25) from Drosophila melanogaster (Fruit fly).